The chain runs to 312 residues: Methionyl-tRNA formyltransferase (312 aa).

112 to 115 contacts (6S)-5,6,7,8-tetrahydrofolate; the sequence is SLLP.

It belongs to the Fmt family.

It catalyses the reaction L-methionyl-tRNA(fMet) + (6R)-10-formyltetrahydrofolate = N-formyl-L-methionyl-tRNA(fMet) + (6S)-5,6,7,8-tetrahydrofolate + H(+). Functionally, attaches a formyl group to the free amino group of methionyl-tRNA(fMet). The formyl group appears to play a dual role in the initiator identity of N-formylmethionyl-tRNA by promoting its recognition by IF2 and preventing the misappropriation of this tRNA by the elongation apparatus. The sequence is that of Methionyl-tRNA formyltransferase from Dehalococcoides mccartyi (strain ATCC BAA-2266 / KCTC 15142 / 195) (Dehalococcoides ethenogenes (strain 195)).